The primary structure comprises 622 residues: Galactolipid galactosyltransferase SFR2, chloroplastic (622 aa).

Topologically, residues 1-3 (MEL) are stromal. Residues 4 to 24 (FALLIKVAGLLATVTVGANVV) traverse the membrane as a helical; Signal-anchor segment. Residues 25–622 (SYSRFRRQNL…LHPALASPFD (598 aa)) lie on the Cytoplasmic side of the membrane. A beta-D-glucoside is bound by residues His222, 266–267 (NE), Tyr377, Glu429, Trp467, 474–475 (EW), and Phe483. The active-site Proton donor is Glu267. Glu429 acts as the Nucleophile in catalysis.

This sequence belongs to the glycosyl hydrolase 1 family. As to expression, expressed in hypocotyls, cotyledons, stems, leaves, pedicels, sepals, anthers and pistils. Limited expression in roots. Not detected in petals or filaments.

The protein resides in the plastid. It localises to the chloroplast. Its subcellular location is the chloroplast outer membrane. It carries out the reaction 2 a 1,2-diacyl-3-O-(beta-D-galactosyl)-sn-glycerol = a 1,2-diacyl-3-O-[beta-D-galactosyl-(1-&gt;6)-beta-D-galactosyl]-sn-glycerol + a 1,2-diacyl-sn-glycerol. Induced by MgCl(2). Functionally, glycosyl hydrolase family protein acting primarily as a highly specific galactosyltransferase. Synthesizes digalactosyldiacylglycerol from monogalactosyldiacylglycerol in the absence of UDP-galactose in vitro. Hydrolyzes o- and p-nitrophenyl beta-D-glucoside in vitro. Plays a role in freezing tolerance. May play a role in chloroplast protection. The protein is Galactolipid galactosyltransferase SFR2, chloroplastic of Arabidopsis thaliana (Mouse-ear cress).